We begin with the raw amino-acid sequence, 379 residues long: Type II methyltransferase M.SsoII (379 aa).

Residues 9 to 66 (IKEKRERLHMTQKEFADALGLSKYGDRTIRRWERGETKPTGAELKAVIDFPDTPPYPN) form the HTH cro/C1-type domain. One can recognise an SAM-dependent MTase C5-type domain in the interval 72–379 (YRMIDLFAGI…AEKIISTLDS (308 aa)). C142 is a catalytic residue.

The protein belongs to the class I-like SAM-binding methyltransferase superfamily. C5-methyltransferase family.

The enzyme catalyses a 2'-deoxycytidine in DNA + S-adenosyl-L-methionine = a 5-methyl-2'-deoxycytidine in DNA + S-adenosyl-L-homocysteine + H(+). Functionally, a methylase that recognizes the double-stranded sequence 5'-CCNGG-3', methylates C-2 on both strands, and protects the DNA from cleavage by the SsoII endonuclease. The polypeptide is Type II methyltransferase M.SsoII (ssoIIM) (Shigella sonnei).